We begin with the raw amino-acid sequence, 307 residues long: Fe-S cluster assembly protein dre2 (307 aa).

Disordered regions lie at residues 1–26 (MTPV…PSTS) and 159–179 (KKKK…VGFV). Residues 15–26 (AAPPTKTAPSTS) show a composition bias toward low complexity. The N-terminal SAM-like domain stretch occupies residues 23–152 (PSTSTRTLLL…EKPAYQEAAV (130 aa)). Residues 153–197 (PLRLGGKKKKAPAPTEQPPVATGVGFVDGNDELIDEDDLLSDDDL) form a linker region. 4 residues coordinate [2Fe-2S] cluster: cysteine 207, cysteine 219, cysteine 222, and cysteine 224. The fe-S binding site A stretch occupies residues 207 to 224 (CQPEKAKKRRRPCKDCTC). The [4Fe-4S] cluster site is built by cysteine 270, cysteine 273, cysteine 281, and cysteine 284. 2 short sequence motifs (cx2C motif) span residues 270–273 (CNSC) and 281–284 (CSSC). Residues 270–284 (CNSCSLGDAFRCSSC) form a fe-S binding site B region.

Belongs to the anamorsin family. In terms of assembly, monomer. Interacts with tah18. Interacts with mia40. It depends on [2Fe-2S] cluster as a cofactor. The cofactor is [4Fe-4S] cluster.

It is found in the cytoplasm. The protein localises to the mitochondrion intermembrane space. Component of the cytosolic iron-sulfur (Fe-S) protein assembly (CIA) machinery required for the maturation of extramitochondrial Fe-S proteins. Part of an electron transfer chain functioning in an early step of cytosolic Fe-S biogenesis, facilitating the de novo assembly of a [4Fe-4S] cluster on the scaffold complex cfd1-nbp35. Electrons are transferred to dre2 from NADPH via the FAD- and FMN-containing protein tah18. Tah18-dre2 are also required for the assembly of the diferric tyrosyl radical cofactor of ribonucleotide reductase (RNR), probably by providing electrons for reduction during radical cofactor maturation in the catalytic small subunit rnr2. The chain is Fe-S cluster assembly protein dre2 from Aspergillus terreus (strain NIH 2624 / FGSC A1156).